Reading from the N-terminus, the 248-residue chain is GPN-loop GTPase PAB0955 (248 aa).

10–15 (GSGKTT) is a GTP binding site. Positions 65 to 67 (GPN) match the Gly-Pro-Asn (GPN)-loop; involved in dimer interface motif. GTP-binding positions include 165 to 168 (NKVD) and Ala224.

This sequence belongs to the GPN-loop GTPase family. Homodimer. Interacts with DNA topoisomerase VI subunit B (top6B), DNA primase DnaG and RF-C.

Small GTPase that may be involved in genome maintenance. Has weak intrinsic GTPase activity but displays no ATPase activity. In Pyrococcus abyssi (strain GE5 / Orsay), this protein is GPN-loop GTPase PAB0955.